The primary structure comprises 316 residues: MTSKNPIQKALYLAFERTQWSVLRDAVPMTLSEQDLENLRGINEKVSLTEVTDIYLPLSRLLNLIVKAKQQRGLVLDEFLGQKPSSSPYIISIAGSVAVGKSTTARILQALLRHWPEHPKVDLVTTDGFLYPLADLKRKGLLQRKGFPESYDMKMLVEFIAAVKSGQAHVNAPIYSHVTYDRIRGQHQTVSQPDILILEGLNVLQTGLDSPVDIRRPFVSDFVDFSIYVDAEEHLLKQWYQERFLQFRKGAFSDEKSYFHHYASLTDDEANVIAAKIWDTINGPNLQLNIQPTRERAHLILQKGQDHLMSHVLLRK.

Glycine 95–serine 102 contacts ATP.

This sequence belongs to the prokaryotic pantothenate kinase family.

The protein resides in the cytoplasm. The catalysed reaction is (R)-pantothenate + ATP = (R)-4'-phosphopantothenate + ADP + H(+). It participates in cofactor biosynthesis; coenzyme A biosynthesis; CoA from (R)-pantothenate: step 1/5. The protein is Pantothenate kinase of Shewanella sp. (strain MR-7).